A 235-amino-acid chain; its full sequence is TIR domain-containing adapter molecule 2 (235 aa).

The interval 1–39 (MGIGKSKINSCPLSLSWGKRHSVDTSPGYHESDSKKSED) is disordered. Residue Gly2 is the site of N-myristoyl glycine attachment. Ser16 is modified (phosphoserine; by PKC/PRKCE). Basic and acidic residues predominate over residues 30–39 (HESDSKKSED). The TIR domain occupies 73 to 229 (AEEEVFLKFV…TIWKETRNMV (157 aa)). Tyr167 carries the phosphotyrosine modification.

Homodimer. Interacts with TLR4, TICAM1, IRF3 and IRF7 in response to LPS. Interacts with IL1R1, IL1RAP, IRAK2, IRAK3 and TRAF6. Interacts with protein kinase-inactive mutants of IRAK1 and IRAK4. Isoform 1 interacts with isoform 2; the interaction occurs in late endosomes and disrupts the interaction between isoform 1 and TICAM1. Interacts with MYD88; the interaction decreases after IL-18 stimulation in a time-dependent manner. Interacts with IL18R1 and IL18RAP. Interacts with TLR2. Interacts with RAB11FIP2. Post-translationally, phosphorylated by PRKCE in response to LPS. Phosphorylation is essential for its function. It is depleted from the membrane upon phosphorylation. Tyrosine phosphorylation is inhibited by phosphatase PTPN4. In terms of processing, isoform 1 is myristoylated. Required for membrane association which is critical for its ability to initiate efficient signaling. Expressed in spleen, prostate, testis, uterus, small intestine, colon, peripheral blood leukocytes, heart, placenta, lung, liver, skeletal muscle, and pancreas Isoform 2 is ubiquitously expressed (at lower levels than isoform 1).

It localises to the cytoplasm. The protein resides in the golgi apparatus. It is found in the cell membrane. Its subcellular location is the endoplasmic reticulum. The protein localises to the early endosome membrane. It localises to the late endosome membrane. The protein resides in the cell projection. It is found in the phagocytic cup. Functions as a sorting adapter in different signaling pathways to facilitate downstream signaling leading to type I interferon induction. In TLR4 signaling, physically bridges TLR4 and TICAM1 and functionally transmits signal to TICAM1 in early endosomes after endocytosis of TLR4. In TLR2 signaling, physically bridges TLR2 and MYD88 and is required for the TLR2-dependent movement of MYD88 to endosomes following ligand engagement. Involved in IL-18 signaling and is proposed to function as a sorting adapter for MYD88 in IL-18 signaling during adaptive immune response. Forms a complex with RAB11FIP2 that is recruited to the phagosomes to promote the activation of the actin-regulatory GTPases RAC1 and CDC42 and subsequent phagocytosis of Gram-negative bacteria. Functionally, proposed to inhibit LPS-TLR4 signaling at the late endosome by interaction with isoform 1 thereby disrupting the association of isoform 1 with TICAM1. May be involved in TLR4 degradation in late endosomes. The polypeptide is TIR domain-containing adapter molecule 2 (TICAM2) (Homo sapiens (Human)).